A 373-amino-acid chain; its full sequence is Chaperone protein DnaJ (373 aa).

Positions 5 to 70 constitute a J domain; that stretch reads DYYEVLGVHR…QQRVIYDQYG (66 aa). The CR-type zinc finger occupies 136-214; sequence GLETKIQIPR…CHGSGRVRGK (79 aa). Zn(2+) contacts are provided by C149, C152, C166, C169, C188, C191, C202, and C205. 4 CXXCXGXG motif repeats span residues 149 to 156, 166 to 173, 188 to 195, and 202 to 209; these read CGTCDGIG, CPTCQGAG, CPECNGEG, and CEECHGSG.

It belongs to the DnaJ family. In terms of assembly, homodimer. Zn(2+) is required as a cofactor.

It localises to the cytoplasm. Participates actively in the response to hyperosmotic and heat shock by preventing the aggregation of stress-denatured proteins and by disaggregating proteins, also in an autonomous, DnaK-independent fashion. Unfolded proteins bind initially to DnaJ; upon interaction with the DnaJ-bound protein, DnaK hydrolyzes its bound ATP, resulting in the formation of a stable complex. GrpE releases ADP from DnaK; ATP binding to DnaK triggers the release of the substrate protein, thus completing the reaction cycle. Several rounds of ATP-dependent interactions between DnaJ, DnaK and GrpE are required for fully efficient folding. Also involved, together with DnaK and GrpE, in the DNA replication of plasmids through activation of initiation proteins. The protein is Chaperone protein DnaJ of Syntrophotalea carbinolica (strain DSM 2380 / NBRC 103641 / GraBd1) (Pelobacter carbinolicus).